Consider the following 396-residue polypeptide: UDP-galactose translocator (396 aa).

A run of 10 helical transmembrane segments spans residues 3–23, 37–57, 65–85, 97–117, 140–160, 169–189, 200–220, 238–258, 269–289, and 315–335; these read AVGAGGSTAAPGPGAVSAGAL, YISLAVLVVQNASLILSIRYA, FFATTAVVMAEVLKGLTCLLL, LVLFLHEAVLVQYVDTLKLAV, TFQVTYQLKILTTALFSVLML, WASLLLLFTGVAIVQAQQAGG, GAGLAAVVASCLSSGFAGVYF, LGLFGTALGLVGLWWAEGTAV, PAVWGVVLNQAFGGLLVAVVV, and LFGFHVDPLFALGAGLVIGAV. The disordered stretch occupies residues 358–379; the sequence is PCVHQQPPGQPPPPQLSSHRGD. The short motif at 392–396 is the ER retention motif element; it reads KVKGS.

The protein belongs to the nucleotide-sugar transporter family. SLC35A subfamily. As to quaternary structure, interacts with SLC35A3; the interaction is reduced in the presence of SLC35A4. Found in a complex with SLC35A3 and SLC35A4. Interacts with B4GALT4.

The protein resides in the endoplasmic reticulum membrane. Its subcellular location is the golgi apparatus membrane. The enzyme catalyses UMP(out) + UDP-alpha-D-galactose(in) = UMP(in) + UDP-alpha-D-galactose(out). It catalyses the reaction UDP-N-acetyl-alpha-D-galactosamine(in) + UMP(out) = UDP-N-acetyl-alpha-D-galactosamine(out) + UMP(in). It carries out the reaction UMP(out) + UDP-alpha-D-glucose(in) = UMP(in) + UDP-alpha-D-glucose(out). The catalysed reaction is UMP(out) + UDP-N-acetyl-alpha-D-glucosamine(in) = UMP(in) + UDP-N-acetyl-alpha-D-glucosamine(out). The enzyme catalyses UDP-alpha-D-galactose(in) + AMP(out) = UDP-alpha-D-galactose(out) + AMP(in). It catalyses the reaction UDP-alpha-D-galactose(in) + CMP(out) = UDP-alpha-D-galactose(out) + CMP(in). It carries out the reaction UDP-N-acetyl-alpha-D-galactosamine(out) + UDP-alpha-D-galactose(in) = UDP-N-acetyl-alpha-D-galactosamine(in) + UDP-alpha-D-galactose(out). The catalysed reaction is UDP-N-acetyl-alpha-D-glucosamine(out) + UDP-alpha-D-galactose(in) = UDP-N-acetyl-alpha-D-glucosamine(in) + UDP-alpha-D-galactose(out). The enzyme catalyses UDP-alpha-D-galactose(in) + UDP-alpha-D-glucose(out) = UDP-alpha-D-galactose(out) + UDP-alpha-D-glucose(in). It catalyses the reaction UMP(out) + CMP(in) = UMP(in) + CMP(out). It carries out the reaction UMP(out) + AMP(in) = UMP(in) + AMP(out). Transports uridine diphosphate galactose (UDP-galactose) from the cytosol into the Golgi apparatus, functioning as an antiporter that exchanges UDP-galactose for UMP. It is also able to exchange UDP-galactose for AMP and CMP, and to transport UDP-N-acetylgalactosamine (UDP-GalNAc) and other nucleotide sugars. As a provider of UDP-galactose to galactosyltransferases present in the Golgi apparatus, it is necessary for globotriaosylceramide/globoside (Gb3Cer) synthesis from lactosylceramide. This Homo sapiens (Human) protein is UDP-galactose translocator.